Here is a 507-residue protein sequence, read N- to C-terminus: Maturase K (507 aa).

Belongs to the intron maturase 2 family. MatK subfamily.

It is found in the plastid. The protein localises to the chloroplast. In terms of biological role, usually encoded in the trnK tRNA gene intron. Probably assists in splicing its own and other chloroplast group II introns. The polypeptide is Maturase K (Calocedrus decurrens (California incense-cedar)).